A 92-amino-acid chain; its full sequence is Large ribosomal subunit protein eL43 (92 aa).

The Zn(2+) site is built by C39, C42, C57, and C60.

Belongs to the eukaryotic ribosomal protein eL43 family. In terms of assembly, component of the large ribosomal subunit. Mature ribosomes consist of a small (40S) and a large (60S) subunit. The 40S subunit contains 32 different proteins and 1 molecule of RNA (18S). The 60S subunit contains 45 different proteins and 3 molecules of RNA (25S, 5.8S and 5S). The cofactor is Zn(2+).

It is found in the cytoplasm. In terms of biological role, component of the ribosome, a large ribonucleoprotein complex responsible for the synthesis of proteins in the cell. The small ribosomal subunit (SSU) binds messenger RNAs (mRNAs) and translates the encoded message by selecting cognate aminoacyl-transfer RNA (tRNA) molecules. The large subunit (LSU) contains the ribosomal catalytic site termed the peptidyl transferase center (PTC), which catalyzes the formation of peptide bonds, thereby polymerizing the amino acids delivered by tRNAs into a polypeptide chain. The nascent polypeptides leave the ribosome through a tunnel in the LSU and interact with protein factors that function in enzymatic processing, targeting, and the membrane insertion of nascent chains at the exit of the ribosomal tunnel. This Candida albicans (strain SC5314 / ATCC MYA-2876) (Yeast) protein is Large ribosomal subunit protein eL43.